Here is an 892-residue protein sequence, read N- to C-terminus: Alanine--tRNA ligase (892 aa).

Zn(2+) is bound by residues histidine 577, histidine 581, cysteine 680, and histidine 684.

This sequence belongs to the class-II aminoacyl-tRNA synthetase family. The cofactor is Zn(2+).

Its subcellular location is the cytoplasm. The catalysed reaction is tRNA(Ala) + L-alanine + ATP = L-alanyl-tRNA(Ala) + AMP + diphosphate. In terms of biological role, catalyzes the attachment of alanine to tRNA(Ala) in a two-step reaction: alanine is first activated by ATP to form Ala-AMP and then transferred to the acceptor end of tRNA(Ala). Also edits incorrectly charged Ser-tRNA(Ala) and Gly-tRNA(Ala) via its editing domain. The chain is Alanine--tRNA ligase from Paenarthrobacter aurescens (strain TC1).